The sequence spans 897 residues: MVLAQGLLSMALLALCWERSLAGAEETIPLQTLRCYNDYTSHITCRWADTQDAQRLVNVTLIRRVNEDLLEPVSCDLSDDMPWSACPHPRCVPRRCVIPCQSFVVTDVDYFSFQPDRPLGTRLTVTLTQHVQPPEPRDLQISTDQDHFLLTWSVALGSPQSHWLSPGDLEFEVVYKRLQDSWEDAAILLSNTSQATLGPEHLMPSSTYVARVRTRLAPGSRLSGRPSKWSPEVCWDSQPGDEAQPQNLECFFDGAAVLSCSWEVRKEVASSVSFGLFYKPSPDAGEEECSPVLREGLGSLHTRHHCQIPVPDPATHGQYIVSVQPRRAEKHIKSSVNIQMAPPSLNVTKDGDSYSLRWETMKMRYEHIDHTFEIQYRKDTATWKDSKTETLQNAHSMALPALEPSTRYWARVRVRTSRTGYNGIWSEWSEARSWDTESVLPMWVLALIVIFLTIAVLLALRFCGIYGYRLRRKWEEKIPNPSKSHLFQNGSAELWPPGSMSAFTSGSPPHQGPWGSRFPELEGVFPVGFGDSEVSPLTIEDPKHVCDPPSGPDTTPAASDLPTEQPPSPQPGPPAASHTPEKQASSFDFNGPYLGPPHSRSLPDILGQPEPPQEGGSQKSPPPGSLEYLCLPAGGQVQLVPLAQAMGPGQAVEVERRPSQGAAGSPSLESGGGPAPPALGPRVGGQDQKDSPVAIPMSSGDTEDPGVASGYVSSADLVFTPNSGASSVSLVPSLGLPSDQTPSLCPGLASGPPGAPGPVKSGFEGYVELPPIEGRSPRSPRNNPVPPEAKSPVLNPGERPADVSPTSPQPEGLLVLQQVGDYCFLPGLGPGPLSLRSKPSSPGPGPEIKNLDQAFQVKKPPGQAVPQVPVIQLFKALKQQDYLSLPPWEVNKPGEVC.

An N-terminal signal peptide occupies residues 1–16 (MVLAQGLLSMALLALC). Over 17–443 (WERSLAGAEE…WDTESVLPMW (427 aa)) the chain is Extracellular. Residues C35 and C45 are joined by a disulfide bond. Residue N58 is glycosylated (N-linked (GlcNAc...) asparagine). Disulfide bonds link C75–C96 and C86–C91. The region spanning 133–240 (PPEPRDLQIS…PEVCWDSQPG (108 aa)) is the Fibronectin type-III 1 domain. N-linked (GlcNAc...) asparagine glycosylation is present at N191. 2 disulfides stabilise this stretch: C250-C260 and C289-C306. One can recognise a Fibronectin type-III 2 domain in the interval 339-436 (QMAPPSLNVT…EWSEARSWDT (98 aa)). N-linked (GlcNAc...) asparagine glycosylation is present at N346. Positions 425 to 429 (WSEWS) match the WSXWS motif motif. A helical membrane pass occupies residues 444 to 460 (VLALIVIFLTIAVLLAL). The Cytoplasmic portion of the chain corresponds to 461 to 897 (RFCGIYGYRL…WEVNKPGEVC (437 aa)). The Box 1 motif motif lies at 474–482 (WEEKIPNPS). Disordered regions lie at residues 498 to 517 (GSMS…WGSR), 532 to 630 (SEVS…EYLC), 648 to 812 (PGQA…QPEG), and 830 to 849 (PGPL…PEIK). Positions 564–574 (EQPPSPQPGPP) are enriched in pro residues. Residues 723–752 (SGASSVSLVPSLGLPSDQTPSLCPGLASGP) show a composition bias toward low complexity. Phosphotyrosine is present on Y766. Over residues 830 to 840 (PGPLSLRSKPS) the composition is skewed to low complexity.

This sequence belongs to the type I cytokine receptor family. Type 4 subfamily. As to quaternary structure, heterodimer of an alpha and a beta subunit. The beta subunit is common to the IL3, IL5 and GM-CSF receptors. The signaling GM-CSF receptor complex is a dodecamer of two head-to-head hexamers of two alpha, two beta, and two ligand subunits. Interacts with TMEM102; this interaction occurs preferentially in the absence of CSF2. Interacts with FCER1G; this interaction is direct. Interacts with LYN. Interacts with JAK1. May be phosphorylated by LYN.

It localises to the membrane. In terms of biological role, cell surface receptor that plays a role in immune response and controls the production and differentiation of hematopoietic progenitor cells into lineage-restricted cells. Acts by forming an heterodimeric receptor through interaction with different partners such as IL3RA, IL5RA or CSF2RA. In turn, participates in various signaling pathways including interleukin-3, interleukin-5 and granulocyte-macrophage colony-stimulating factor/CSF2 pathways. In unstimulated conditions, interacts constitutively with JAK1 and ligand binding leads to JAK1 stimulation and subsequent activation of the JAK-STAT pathway. The chain is Cytokine receptor common subunit beta (CSF2RB) from Homo sapiens (Human).